The following is a 275-amino-acid chain: MALVKTKPTSPGRRFVVKVVHPELHKGDPYAPLVESKNRINSRNNQGRITVRRRGGGHKRNYRIIDFKRDKEGIEGKVERLEYDPNRSAHIALVLYPDGERRYIIAPKGVHKGSKVVSGREAPIRPGNCLPLQNIPLGATIHNIELKPGKGAQLVRSAGASAQLAAKEGIYAIIRMRSGETRKILAVCRACIGEVSNSEHNLRSLGKAGAKRWRGRRPTVRGVAMNPVDHPHGGGEGKTSGGRHPVSPTGKPTKGYKTRRNKRTSNMIIRDRRKK.

The interval 208–275 is disordered; the sequence is AGAKRWRGRR…NMIIRDRRKK (68 aa). 2 stretches are compositionally biased toward basic residues: residues 209–219 and 254–263; these read GAKRWRGRRPT and KGYKTRRNKR.

The protein belongs to the universal ribosomal protein uL2 family. As to quaternary structure, part of the 50S ribosomal subunit. Forms a bridge to the 30S subunit in the 70S ribosome.

In terms of biological role, one of the primary rRNA binding proteins. Required for association of the 30S and 50S subunits to form the 70S ribosome, for tRNA binding and peptide bond formation. It has been suggested to have peptidyltransferase activity; this is somewhat controversial. Makes several contacts with the 16S rRNA in the 70S ribosome. The chain is Large ribosomal subunit protein uL2 from Coxiella burnetii (strain CbuG_Q212) (Coxiella burnetii (strain Q212)).